Consider the following 60-residue polypeptide: UPF0434 protein YPA_0693 (60 aa).

This sequence belongs to the UPF0434 family.

This Yersinia pestis bv. Antiqua (strain Antiqua) protein is UPF0434 protein YPA_0693.